We begin with the raw amino-acid sequence, 317 residues long: Melanocyte-stimulating hormone receptor (317 aa).

Topologically, residues 1–37 (MPVQGSQRRLLGSLNSTPTATPKLGLAANQTGAWCLE) are extracellular. Asparagine 29 carries an N-linked (GlcNAc...) asparagine glycan. Residues 38 to 63 (VSIPDGLFLSLGLVSLVENVLVVAAI) form a helical membrane-spanning segment. Topologically, residues 64 to 72 (AKNRNLHSP) are cytoplasmic. The helical transmembrane segment at 73 to 93 (MYCFICCLALSDLLVSGSNML) threads the bilayer. Residues 94-118 (ETAVILLLEAGALAARAAVVQQLDN) are Extracellular-facing. The chain crosses the membrane as a helical span at residues 119 to 140 (VIDVITCSSMLSSLCFLGAIAV). Topologically, residues 141 to 163 (DRYISIFYALRYHSIVTLPRAQR) are cytoplasmic. The chain crosses the membrane as a helical span at residues 164 to 183 (VVAAIWVASVLFSTLFIAYY). The Extracellular portion of the chain corresponds to 184–191 (DHAAVLLC). Residues 192–211 (LVVFFLAMLVLMAVLYVHML) form a helical membrane-spanning segment. Over 212 to 240 (ARACQHAQGIAQLHKRQRPAHQGFGLKGA) the chain is Cytoplasmic. A helical transmembrane segment spans residues 241–266 (ATLTILLGIFFLCWGPFFLHLTLIVL). Residues 267 to 279 (CPQHPTCSCIFKN) lie on the Extracellular side of the membrane. A helical transmembrane segment spans residues 280–300 (FNLFLALIICNAIIDPLIYAF). Residues 301–317 (RSQELRRTLKEVLLCSW) are Cytoplasmic-facing. Residue cysteine 315 is the site of S-palmitoyl cysteine attachment.

It belongs to the G-protein coupled receptor 1 family. As to quaternary structure, interacts with MGRN1, but does not undergo MGRN1-mediated ubiquitination; this interaction competes with GNAS-binding and thus inhibits agonist-induced cAMP production. Interacts with OPN3; the interaction results in a decrease in MC1R-mediated cAMP signaling and ultimately a decrease in melanin production in melanocytes.

It localises to the cell membrane. In terms of biological role, receptor for MSH (alpha, beta and gamma) and ACTH. The activity of this receptor is mediated by G proteins which activate adenylate cyclase. Mediates melanogenesis, the production of eumelanin (black/brown) and phaeomelanin (red/yellow), via regulation of cAMP signaling in melanocytes. This chain is Melanocyte-stimulating hormone receptor (MC1R), found in Colobus guereza (Mantled guereza).